The following is a 546-amino-acid chain: Chaperonin GroEL (546 aa).

ATP-binding positions include 29–32, Lys-50, 86–90, Gly-414, and Asp-492; these read TMGP and DGTTT.

This sequence belongs to the chaperonin (HSP60) family. As to quaternary structure, forms a cylinder of 14 subunits composed of two heptameric rings stacked back-to-back. Interacts with the co-chaperonin GroES.

It is found in the cytoplasm. The enzyme catalyses ATP + H2O + a folded polypeptide = ADP + phosphate + an unfolded polypeptide.. Functionally, together with its co-chaperonin GroES, plays an essential role in assisting protein folding. The GroEL-GroES system forms a nano-cage that allows encapsulation of the non-native substrate proteins and provides a physical environment optimized to promote and accelerate protein folding. The sequence is that of Chaperonin GroEL from Helicobacter acinonychis (strain Sheeba).